We begin with the raw amino-acid sequence, 476 residues long: Ureidoglycolate hydrolase (476 aa).

The N-terminal stretch at 1–25 (MESLKRFLCSIALLLISLLLPSSLA) is a signal peptide. Mn(2+)-binding residues include histidine 138, aspartate 149, glutamate 184, and histidine 254. Residues 183–184 (EE), 254–257 (HIEQ), histidine 290, asparagine 340, arginine 353, 423–424 (YH), and histidine 448 each bind substrate. The segment at 276–391 (APASLKVEFE…LSEFKIVNQD (116 aa)) is involved in dimerization. Histidine 448 is a binding site for Mn(2+).

Belongs to the peptidase M20 family. As to quaternary structure, homodimer. It depends on Mn(2+) as a cofactor. Requires Ni(2+) as cofactor. The cofactor is Co(2+).

The protein localises to the endoplasmic reticulum. The enzyme catalyses (S)-ureidoglycolate + H2O + 2 H(+) = glyoxylate + 2 NH4(+) + CO2. It participates in nitrogen metabolism; (S)-allantoin degradation; glyoxylate from (S)-ureidoglycolate: step 1/1. Involved in the catabolism of purine nucleotides. Can use (S)-ureidoglycolate as substrate, but not (R)-ureidoglycolate or allantoate. The sequential activity of AAH, UGLYAH and UAH allows a complete purine breakdown without the intermediate generation of urea. This is Ureidoglycolate hydrolase from Arabidopsis thaliana (Mouse-ear cress).